The primary structure comprises 354 residues: Divinyl chlorophyll a/b light-harvesting protein PcbF (354 aa).

Helical transmembrane passes span 27–47 (FIAS…SNTL), 88–108 (VVTL…GGLL), 140–160 (FILG…VEWA), 201–221 (VMGG…FHAI), 248–268 (AILS…AFWC), and 315–335 (TANF…WHAL).

Belongs to the PsbB/PsbC family. IsiA/Pcb subfamily. In terms of assembly, the antenna complex consists of divinyl chlorophylls (a and b) and divinyl chlorophyll a/b binding proteins and binds more divinyl chlorophyll b than does the antenna complex from high-light-adapted Prochlorococcus. The cofactor is divinyl chlorophyll a. Divinyl chlorophyll b serves as cofactor.

Its subcellular location is the cellular thylakoid membrane. Functionally, the antenna complex functions as a light receptor, it captures and delivers excitation energy to photosystems II and I. The Prochlorales pcb genes are not related to higher plant LHCs. The sequence is that of Divinyl chlorophyll a/b light-harvesting protein PcbF (pcbF) from Prochlorococcus marinus (strain SARG / CCMP1375 / SS120).